A 397-amino-acid chain; its full sequence is MERFKKASSIIETLKQQGHEAYFVGGSVRDLIIDRPIGDIDIATSALPEEVMAIFPRHVPVGLEHGTVIVVENGEPYEVTTFRTESEYEDFRRPSSVQFVRSLEEDLKRRDFTMNAIAMTEEGEMVDLFAGQEAIQKREIVTVGNAADRFQEDALRMMRGIRFVSTLGFSLETKTKQAIETYGHLLEHIAIERITVEFEKLLTGTYCVKGLKELVETKLFSHLPYLQMSEERLLKATQYNWDSFETDIEAWAFFLYCIGEEHPSVFLRQWKFSNKKIKDIVAVLLTIRKRKEKDWDTVLLYKTGIHIAEMAERVYEAMIESYDHTSVERVQTLFQALPIKSRQEMDVTGNDLLNWASKKPGPWVAEMIQKIEEAIVQGNVVNEKECIREWLQECNLL.

Gly26 and Arg29 together coordinate ATP. The CTP site is built by Gly26 and Arg29. 2 residues coordinate Mg(2+): Asp39 and Asp41. ATP is bound by residues Arg110, Asp153, Arg156, Arg159, and Arg162. CTP contacts are provided by Arg110, Asp153, Arg156, Arg159, and Arg162.

It belongs to the tRNA nucleotidyltransferase/poly(A) polymerase family. Bacterial CCA-adding enzyme type 3 subfamily. Homodimer. Mg(2+) is required as a cofactor.

The enzyme catalyses a tRNA precursor + 2 CTP + ATP = a tRNA with a 3' CCA end + 3 diphosphate. The catalysed reaction is a tRNA with a 3' CCA end + 2 CTP + ATP = a tRNA with a 3' CCACCA end + 3 diphosphate. In terms of biological role, catalyzes the addition and repair of the essential 3'-terminal CCA sequence in tRNAs without using a nucleic acid template. Adds these three nucleotides in the order of C, C, and A to the tRNA nucleotide-73, using CTP and ATP as substrates and producing inorganic pyrophosphate. tRNA 3'-terminal CCA addition is required both for tRNA processing and repair. Also involved in tRNA surveillance by mediating tandem CCA addition to generate a CCACCA at the 3' terminus of unstable tRNAs. While stable tRNAs receive only 3'-terminal CCA, unstable tRNAs are marked with CCACCA and rapidly degraded. The polypeptide is CCA-adding enzyme (Bacillus thuringiensis subsp. konkukian (strain 97-27)).